Reading from the N-terminus, the 881-residue chain is Serine/threonine-protein phosphatase 6 regulatory subunit 1 (881 aa).

An interaction with PPP6C region spans residues 10–403; the sequence is SSHLDTLLER…VFNNFLHAQV (394 aa). At Ser232 the chain carries Phosphoserine. Thr524 carries the post-translational modification Phosphothreonine. Phosphoserine occurs at positions 529, 530, 531, 635, and 638. Composition is skewed to acidic residues over residues 621 to 642 and 669 to 686; these read DDDE…DGED and DSED…DEEG. The segment at 621 to 881 is disordered; sequence DDDEEEEDEE…PEGPASPGSQ (261 aa). Positions 700-710 are enriched in pro residues; that stretch reads YPSPGPQPPGP. Phosphoserine occurs at positions 702, 726, and 759. Polar residues predominate over residues 814 to 830; it reads APSSSDSATRDPSTSVP. A Phosphoserine modification is found at Ser846.

Belongs to the SAPS family. Protein phosphatase 6 (PP6) holoenzyme is proposed to be a heterotrimeric complex formed of the catalytic subunit, a SAPS domain-containing subunit (PP6R) and an ankyrin repeat-domain containing regulatory subunit (ARS). Interacts with PPP6C and NFKBIE. Interacts with ANKRD28, ANKRD44 and ANKRD52. As to expression, ubiquitous with higher expression in testis.

The protein resides in the cytoplasm. Regulatory subunit of protein phosphatase 6 (PP6). May function as a scaffolding PP6 subunit. Involved in the PP6-mediated dephosphorylation of NFKBIE opposing its degradation in response to TNF-alpha. This is Serine/threonine-protein phosphatase 6 regulatory subunit 1 (PPP6R1) from Homo sapiens (Human).